We begin with the raw amino-acid sequence, 345 residues long: N-glycosylase/DNA lyase (345 aa).

The DNA site is built by N149, R154, and R204. The active-site Schiff-base intermediate with DNA is the K249. P266 and D268 together coordinate 8-oxoguanine. Residues H270 and Q287 each coordinate DNA. 2 residues coordinate 8-oxoguanine: Q315 and F319.

The protein belongs to the type-1 OGG1 family. As to expression, highest expression in testis.

The protein localises to the nucleus. It is found in the nucleoplasm. The protein resides in the nucleus speckle. Its subcellular location is the nucleus matrix. It catalyses the reaction 2'-deoxyribonucleotide-(2'-deoxyribose 5'-phosphate)-2'-deoxyribonucleotide-DNA = a 3'-end 2'-deoxyribonucleotide-(2,3-dehydro-2,3-deoxyribose 5'-phosphate)-DNA + a 5'-end 5'-phospho-2'-deoxyribonucleoside-DNA + H(+). In terms of biological role, DNA repair enzyme that incises DNA at 8-oxoG residues. Excises 7,8-dihydro-8-oxoguanine and 2,6-diamino-4-hydroxy-5-N-methylformamidopyrimidine (FAPY) from damaged DNA. Has a beta-lyase activity that nicks DNA 3' to the lesion. In Mus musculus (Mouse), this protein is N-glycosylase/DNA lyase (Ogg1).